Consider the following 192-residue polypeptide: Phosphoheptose isomerase (192 aa).

Positions 37 to 192 constitute an SIS domain; sequence IAASLRDGGK…IMLIEKELAV (156 aa). 52 to 54 is a substrate binding site; it reads NGG. Histidine 61 and glutamate 65 together coordinate Zn(2+). Substrate contacts are provided by residues glutamate 65, 93–94, 119–121, serine 124, and glutamine 172; these read ND and STS. The Zn(2+) site is built by glutamine 172 and histidine 180.

It belongs to the SIS family. GmhA subfamily. As to quaternary structure, homotetramer. Requires Zn(2+) as cofactor.

Its subcellular location is the cytoplasm. The enzyme catalyses 2 D-sedoheptulose 7-phosphate = D-glycero-alpha-D-manno-heptose 7-phosphate + D-glycero-beta-D-manno-heptose 7-phosphate. It participates in carbohydrate biosynthesis; D-glycero-D-manno-heptose 7-phosphate biosynthesis; D-glycero-alpha-D-manno-heptose 7-phosphate and D-glycero-beta-D-manno-heptose 7-phosphate from sedoheptulose 7-phosphate: step 1/1. In terms of biological role, catalyzes the isomerization of sedoheptulose 7-phosphate in D-glycero-D-manno-heptose 7-phosphate. This is Phosphoheptose isomerase from Tolumonas auensis (strain DSM 9187 / NBRC 110442 / TA 4).